The following is a 702-amino-acid chain: Polyribonucleotide nucleotidyltransferase (702 aa).

Positions 487 and 493 each coordinate Mg(2+). The region spanning 554-613 is the KH domain; the sequence is PRLLTIKIHPDKIREVIGKGGSTIQAITKETGTQIDIQDDGTIVIASVNAIAAQAAKARI. Residues 623–691 enclose the S1 motif domain; that stretch reads GRIYEGKVAK…KQGRIRLSMK (69 aa).

Belongs to the polyribonucleotide nucleotidyltransferase family. Component of the RNA degradosome, which is a multiprotein complex involved in RNA processing and mRNA degradation. Requires Mg(2+) as cofactor.

Its subcellular location is the cytoplasm. It carries out the reaction RNA(n+1) + phosphate = RNA(n) + a ribonucleoside 5'-diphosphate. In terms of biological role, involved in mRNA degradation. Catalyzes the phosphorolysis of single-stranded polyribonucleotides processively in the 3'- to 5'-direction. This chain is Polyribonucleotide nucleotidyltransferase, found in Stenotrophomonas maltophilia (strain K279a).